We begin with the raw amino-acid sequence, 463 residues long: Argininosuccinate lyase (463 aa).

Belongs to the lyase 1 family. Argininosuccinate lyase subfamily.

The protein resides in the cytoplasm. It carries out the reaction 2-(N(omega)-L-arginino)succinate = fumarate + L-arginine. It participates in amino-acid biosynthesis; L-arginine biosynthesis; L-arginine from L-ornithine and carbamoyl phosphate: step 3/3. The polypeptide is Argininosuccinate lyase (Staphylococcus epidermidis (strain ATCC 35984 / DSM 28319 / BCRC 17069 / CCUG 31568 / BM 3577 / RP62A)).